A 470-amino-acid polypeptide reads, in one-letter code: Iron-sulfur cluster assembly SufBD family protein ABCI9 (470 aa).

Belongs to the iron-sulfur cluster assembly SufBD family.

This chain is Iron-sulfur cluster assembly SufBD family protein ABCI9 (ABCI9), found in Arabidopsis thaliana (Mouse-ear cress).